The chain runs to 152 residues: Protein-export protein SecB (152 aa).

This sequence belongs to the SecB family. In terms of assembly, homotetramer, a dimer of dimers. One homotetramer interacts with 1 SecA dimer.

The protein resides in the cytoplasm. Functionally, one of the proteins required for the normal export of preproteins out of the cell cytoplasm. It is a molecular chaperone that binds to a subset of precursor proteins, maintaining them in a translocation-competent state. It also specifically binds to its receptor SecA. The sequence is that of Protein-export protein SecB from Rickettsia felis (strain ATCC VR-1525 / URRWXCal2) (Rickettsia azadi).